Reading from the N-terminus, the 187-residue chain is Peptide deformylase (187 aa).

Fe cation-binding residues include Cys-94 and His-136. Residue Glu-137 is part of the active site. His-140 contributes to the Fe cation binding site.

The protein belongs to the polypeptide deformylase family. The cofactor is Fe(2+).

The catalysed reaction is N-terminal N-formyl-L-methionyl-[peptide] + H2O = N-terminal L-methionyl-[peptide] + formate. Its function is as follows. Removes the formyl group from the N-terminal Met of newly synthesized proteins. Requires at least a dipeptide for an efficient rate of reaction. N-terminal L-methionine is a prerequisite for activity but the enzyme has broad specificity at other positions. This Chlorobaculum tepidum (strain ATCC 49652 / DSM 12025 / NBRC 103806 / TLS) (Chlorobium tepidum) protein is Peptide deformylase.